A 961-amino-acid polypeptide reads, in one-letter code: MAGGTGCVRLWGAARCWTLRRPLLAAAGGRVPTAARAWLPRGRRACDASPPWALWGQSPAAAGHWRGLWEANNRSGGGAFSGGEDASEGGAEDGASGVGGSAGGGEGPVITALTPMMIPDVFPHLPLIAVTRNPVFPRFIKIVEVKNKKLVELLRRKVHLAQPYAGVFLKKDDNNESDVVENLDEIYHTGTFVQIHEMQDLGDKLRMIVMGHRRVHINRQLEVEPEEPEGENKQKLRKKPKRGKKEAEEDGATKRPLEVVVGPGPSPAGEVLMVEVENVAHEDFQVTEEVKALTAEIVKTIRDIIALNPLYRESVLQMMQAGHRVVDNPIYLSDMGAALTGAESHELQEVLEETNIPKRLYKALSLLKKEFELSKLQQRLGREVEEKIKQTHRKYLLQEQLKIIKKELGLEKDDKDAIEEKFRERLKELVVPKHVMDVVDEELSKLGLLDNHSSEFNVTRNYLDWLTSIPWGKHSDENLDLARAQAVLEEDHYGMEDVKKRILEFIAVSQLRGSTQGKILCFYGPPGVGKTSIARSIARALNREYFRFSVGGMTDVAEIKGHRRTYVGAMPGKIIQCLKKTKTENPLVLIDEVDKIGRGYQGDPSSALLELLDPEQNANFLDHYLDVPVDLSKVLFICTANITETIPEPLRDRMEMINVSGYVAQEKLAIAERYLVPQARALCGLDESKAKLSSDVLTLLIKQYCRESGVRNLQKQVEKVLRKSAYKIVSGEAEFVEVTPENLQDFVGKPVFTVERMYDVTPPGVVMGLAWTAMGGSTLFVETSLRRPRDRDSDKGDKDGSLEVTGQLGEVMKESARIAYTFARAFLMQHDSANKFLVTSHIHLHVPEGATPKDGPSAGCTIVTALLSLALDRPVRQNLAMTGEVSLTGKVLPVGGIKEKTIAAKRAGVTCIVLPAENKKDFYDLAAFITEGLEVHFVEHYREIFDIAFPEERAEALAVER.

The transit peptide at 1–67 (MAGGTGCVRL…SPAAAGHWRG (67 aa)) directs the protein to the mitochondrion. 2 disordered regions span residues 76 to 103 (GGGA…GSAG) and 220 to 262 (QLEV…VVVG). The Lon N-terminal domain occupies 125–371 (LPLIAVTRNP…KALSLLKKEF (247 aa)). Residues 235–244 (KLRKKPKRGK) are compositionally biased toward basic residues. Basic and acidic residues predominate over residues 245–257 (KEAEEDGATKRPL). Position 524–531 (524–531 (GPPGVGKT)) interacts with ATP. The Lon proteolytic domain occupies 760 to 951 (VTPPGVVMGL…REIFDIAFPE (192 aa)). Residues 784-801 (SLRRPRDRDSDKGDKDGS) are compositionally biased toward basic and acidic residues. The tract at residues 784-803 (SLRRPRDRDSDKGDKDGSLE) is disordered. Residues serine 857 and lysine 900 contribute to the active site.

The protein belongs to the peptidase S16 family. As to quaternary structure, homohexamer. Organized in a ring with a central cavity. The ATP-binding and proteolytic domains (AP-domain) form a hexameric chamber, while the N-terminal domain is arranged as a trimer of dimers. DNA and RNA binding is stimulated by substrate and inhibited by ATP binding. Interacts with TWNK and mitochondrial DNA polymerase subunit POLG.

The protein resides in the mitochondrion matrix. The catalysed reaction is Hydrolysis of proteins in presence of ATP.. In terms of biological role, ATP-dependent serine protease that mediates the selective degradation of misfolded, unassembled or oxidatively damaged polypeptides as well as certain short-lived regulatory proteins in the mitochondrial matrix. Endogenous substrates include mitochondrial steroidogenic acute regulatory (StAR) protein, DELE1, helicase Twinkle (TWNK) and the large ribosomal subunit protein MRPL32/bL32m. MRPL32/bL32m is protected from degradation by LONP1 when it is bound to a nucleic acid (RNA), but TWNK is not. May also have a chaperone function in the assembly of inner membrane protein complexes. Participates in the regulation of mitochondrial gene expression and in the maintenance of the integrity of the mitochondrial genome. Binds to mitochondrial promoters and RNA in a single-stranded, site-specific, and strand-specific manner. May regulate mitochondrial DNA replication and/or gene expression using site-specific, single-stranded DNA binding to target the degradation of regulatory proteins binding to adjacent sites in mitochondrial promoters. The polypeptide is Lon protease homolog, mitochondrial (Bos taurus (Bovine)).